The sequence spans 103 residues: Large ribosomal subunit protein bL21 (103 aa).

The protein belongs to the bacterial ribosomal protein bL21 family. In terms of assembly, part of the 50S ribosomal subunit. Contacts protein L20.

In terms of biological role, this protein binds to 23S rRNA in the presence of protein L20. The chain is Large ribosomal subunit protein bL21 from Borreliella afzelii (strain PKo) (Borrelia afzelii).